We begin with the raw amino-acid sequence, 289 residues long: ATP synthase gamma chain (289 aa).

It belongs to the ATPase gamma chain family. As to quaternary structure, F-type ATPases have 2 components, CF(1) - the catalytic core - and CF(0) - the membrane proton channel. CF(1) has five subunits: alpha(3), beta(3), gamma(1), delta(1), epsilon(1). CF(0) has three main subunits: a, b and c.

It is found in the cell inner membrane. In terms of biological role, produces ATP from ADP in the presence of a proton gradient across the membrane. The gamma chain is believed to be important in regulating ATPase activity and the flow of protons through the CF(0) complex. This Haemophilus influenzae (strain PittEE) protein is ATP synthase gamma chain.